The sequence spans 150 residues: MSTVKRILLINGPNLNLLGLREPGHYGHHTLAQLVADLTVKATNLSVTLDHIQSNAEHELIDAIHQAHGNVDFIIINPAAFTHTSVAIRDALLGVAIPFIEVHLSNVHAREPFRHHSYLSDKAVGVICGLGPDGYEFALNAAVRRLQSES.

Catalysis depends on tyrosine 26, which acts as the Proton acceptor. Substrate-binding residues include asparagine 77, histidine 83, and aspartate 90. The Proton donor role is filled by histidine 103. Residues 104–105 (LS) and arginine 114 each bind substrate.

The protein belongs to the type-II 3-dehydroquinase family. In terms of assembly, homododecamer.

It catalyses the reaction 3-dehydroquinate = 3-dehydroshikimate + H2O. It functions in the pathway metabolic intermediate biosynthesis; chorismate biosynthesis; chorismate from D-erythrose 4-phosphate and phosphoenolpyruvate: step 3/7. Catalyzes a trans-dehydration via an enolate intermediate. The chain is 3-dehydroquinate dehydratase from Photobacterium profundum (strain SS9).